We begin with the raw amino-acid sequence, 183 residues long: Gamma-crystallin N (183 aa).

Beta/gamma crystallin 'Greek key' domains are found at residues 6–46 (GKIT…RVES), 47–89 (GAWV…RPVG), 95–136 (FRID…KVYG), and 138–180 (GAWV…RRVL).

This sequence belongs to the beta/gamma-crystallin family. As to quaternary structure, monomer. In terms of tissue distribution, detected in the auditory hindbrain where it is highly expressed in the medial nucleus of the trapezoid body, but also present in other nuclei of the superior olivary complex.

Functionally, crystallins are the dominant structural components of the vertebrate eye lens. Also plays an important role for integrity and function of auditory nuclei. The protein is Gamma-crystallin N of Rattus norvegicus (Rat).